Here is a 432-residue protein sequence, read N- to C-terminus: Putative D-alanyl-D-alanine carboxypeptidase (432 aa).

A helical; Signal-anchor transmembrane segment spans residues 7 to 25; sequence ATVLLTFSLSAFAVEYPVL.

This sequence belongs to the peptidase S12 family. YfeW subfamily.

The protein resides in the cell inner membrane. The catalysed reaction is Preferential cleavage: (Ac)2-L-Lys-D-Ala-|-D-Ala. Also transpeptidation of peptidyl-alanyl moieties that are N-acyl substituents of D-alanine.. The chain is Putative D-alanyl-D-alanine carboxypeptidase from Salmonella agona (strain SL483).